A 1904-amino-acid chain; its full sequence is Pericentriolar material 1 protein (1904 aa).

Disordered regions lie at residues 1–135 (MATG…SGEP), 159–179 (QEDG…PQQE), 265–303 (HDSQ…QSDE), 338–361 (NSSF…TSAA), 376–407 (NSLA…EKLQ), 430–489 (SDMM…GTNN), and 520–559 (CHNR…LGDV). Basic and acidic residues predominate over residues 43-60 (RSSEKNKKKLGGEAETRL). The segment covering 107–118 (INFSDLDQINTN) has biased composition (polar residues). The stretch at 171–212 (SQARDPQQEAKEELENLKKQHDLLKRMLQQQEQLKALQGRQA) forms a coiled coil. The span at 280–298 (ESLSLTREISQSRNSSVSE) shows a compositional bias: polar residues. Residues 301 to 334 (SDEKAQLFNKMRMLQGKKQKMDKLLGELHTLRDQ) adopt a coiled-coil conformation. The segment covering 338 to 348 (NSSFFPASSSP) has biased composition (low complexity). Residues 349–361 (QRSIDQRSTTSAA) are compositionally biased toward polar residues. A coiled-coil region spans residues 403–429 (TEKLQKLNEVRKRLNELRELVHYYEQT). Over residues 442–452 (KEEEETEDSGS) the composition is skewed to acidic residues. The span at 461–470 (PVTNIRNPQG) shows a compositional bias: polar residues. Residues 471-482 (ISSWSEINSNSN) show a composition bias toward low complexity. The span at 520–534 (CHNREDDKHADLPHG) shows a compositional bias: basic and acidic residues. The span at 535–544 (EDDEVEEDRA) shows a compositional bias: acidic residues. Coiled coils occupy residues 562–592 (DAEF…VQDD) and 636–686 (LNEK…LQSA). The interval 686–706 (AGLGNSPANRQTSPATSTPAM) is disordered. Residues 687–706 (GLGNSPANRQTSPATSTPAM) show a composition bias toward polar residues. A coiled-coil region spans residues 731–768 (SEMRRHEILREELRRRRKQLEALMAEHQRRRELAETIS). The tract at residues 773–840 (SVKSEGSEAQ…PSMNDSFSAY (68 aa)) is disordered. Residues 779–804 (SEAQRTPQQSRTENRTMATWGGSTQC) show a composition bias toward polar residues. Residues 806–830 (LDEEDGDEDGYLSDGLDQAEEEEDA) show a composition bias toward acidic residues. 2 coiled-coil regions span residues 895 to 927 (SELS…CQTL) and 970 to 1000 (TQLS…CQEK). Disordered regions lie at residues 991–1018 (HQQE…SPVF), 1063–1082 (GFPQ…ASGK), and 1088–1225 (FPKP…TGYD). Polar residues-rich tracts occupy residues 1064–1073 (FPQSSEQQQH) and 1093–1102 (ESSSSTGAEN). Residues 1103–1117 (QRSHRQPEDEVEKRS) show a composition bias toward basic and acidic residues. Residues 1141–1150 (SVQSIASGHK) show a composition bias toward polar residues. Residues 1151–1162 (NQSDTSRRRNFD) show a composition bias toward basic and acidic residues. Over residues 1173 to 1182 (PDPVDPTTVT) the composition is skewed to low complexity. A coiled-coil region spans residues 1421-1447 (IHLDQALARMREYERMKIEAESTLDSE). Residues 1616 to 1625 (AKEDKDETET) show a composition bias toward basic and acidic residues. Disordered stretches follow at residues 1616–1741 (AKED…VKGE), 1774–1838 (MKTE…SDED), and 1865–1904 (EAQT…AQSA). Positions 1649 to 1658 (SDQEEDEESE) are enriched in acidic residues. Polar residues predominate over residues 1668–1678 (KAETQALTNYG). The segment covering 1680–1695 (GEDENEDEEIEFEEGP) has biased composition (acidic residues). 3 stretches are compositionally biased toward polar residues: residues 1698-1720 (VQTS…SQEL), 1728-1737 (ILSSEQQSVN), and 1779-1791 (SSSS…TQML). The span at 1800–1812 (SSAGSSESSMAGS) shows a compositional bias: low complexity. Residues 1881–1897 (EQDRELVGDAQTLKEPE) show a composition bias toward basic and acidic residues.

The protein belongs to the PCM1 family. As to quaternary structure, self-associates.

It is found in the cytoplasm. Its subcellular location is the cytoskeleton. It localises to the microtubule organizing center. The protein resides in the centrosome. The protein localises to the cytoplasmic granule. It is found in the centriolar satellite. Its subcellular location is the cilium basal body. Its function is as follows. Required for centrosome assembly and function. Essential for the correct localization of several centrosomal proteins including CETN3 and PCNT. Required to anchor microtubules to the centrosome. Probably involved in the biogenesis of cilia. This Gallus gallus (Chicken) protein is Pericentriolar material 1 protein (PCM1).